The following is a 339-amino-acid chain: Bifunctional NMN adenylyltransferase/Nudix hydrolase (339 aa).

Positions 1–183 are NMN adenylyltransferase; the sequence is MQTKYQYGIY…RYIALCDEYQ (183 aa). The region spanning 199 to 335 is the Nudix hydrolase domain; sequence PTFITTDAVV…EDHFQIIQHF (137 aa). A Nudix box motif is present at residues 233 to 254; it reads GFIKQNETLVEGMLRELKEETR.

In the N-terminal section; belongs to the archaeal NMN adenylyltransferase family. It depends on Mg(2+) as a cofactor. Mn(2+) serves as cofactor.

Its subcellular location is the cytoplasm. It carries out the reaction beta-nicotinamide D-ribonucleotide + ATP + H(+) = diphosphate + NAD(+). Its pathway is cofactor biosynthesis; NAD(+) biosynthesis; NAD(+) from nicotinamide D-ribonucleotide: step 1/1. Its function is as follows. The Nudix hydrolase domain is active on ADP-ribose, (2')-phospho-ADP-ribose, IDP-ribose and NADPH. This is Bifunctional NMN adenylyltransferase/Nudix hydrolase from Synechocystis sp. (strain ATCC 27184 / PCC 6803 / Kazusa).